A 281-amino-acid polypeptide reads, in one-letter code: Hexaprenyl pyrophosphate synthase (281 aa).

3 residues coordinate isopentenyl diphosphate: Lys-42, Arg-45, and His-74. 2 residues coordinate Mg(2+): Asp-81 and Asp-85. Arg-91 is an isopentenyl diphosphate binding site.

Belongs to the FPP/GGPP synthase family. Homodimer. Mg(2+) is required as a cofactor.

The catalysed reaction is 2 isopentenyl diphosphate + (2E,6E,10E)-geranylgeranyl diphosphate = all-trans-hexaprenyl diphosphate + 2 diphosphate. Catalyzes consecutive E-type condensation of two isopentenyl pyrophosphate (IPP) molecules with an allylic substrate such as geranylgeranyl diphosphate (GGPP), farnesyl diphosphate (FPP) or geranyl diphosphate (GPP) to yield the medium-chain product trans-C30-hexaprenyl pyrophosphate (HexPP). GGPP is the physiological substrate. The polypeptide is Hexaprenyl pyrophosphate synthase (gdS-2) (Saccharolobus solfataricus (strain ATCC 35092 / DSM 1617 / JCM 11322 / P2) (Sulfolobus solfataricus)).